Reading from the N-terminus, the 669-residue chain is uncharacterized protein (669 aa).

A run of 6 helical transmembrane segments spans residues 39–61 (LCPL…GTSW), 124–146 (ISLW…LISI), 153–175 (GIIY…YALG), 190–212 (GLAF…FFGV), 221–243 (FAPG…QTAL), and 263–285 (IAAG…IRYL). RCK C-terminal domains follow at residues 316 to 397 (AGSL…KLIG) and 398 to 483 (KESD…LGGR). The next 5 membrane-spanning stretches (helical) occupy residues 484 to 506 (PILN…GYIF), 516 to 538 (IPFA…YWRS), 558 to 580 (IGLN…ESFH), 585 to 607 (IWVA…VVGI), and 645 to 667 (VPYP…FAML).

Belongs to the AAE transporter (TC 2.A.81) family.

Its subcellular location is the cell membrane. This is an uncharacterized protein from Desulfotalea psychrophila (strain LSv54 / DSM 12343).